The following is a 168-amino-acid chain: Phosphopantetheine adenylyltransferase (168 aa).

Threonine 11 contributes to the substrate binding site. Residues 11-12 and histidine 19 contribute to the ATP site; that span reads TF. Substrate is bound by residues lysine 43, threonine 75, and arginine 89. ATP-binding positions include 90 to 92, glutamate 100, and 125 to 131; these read GIR and WSYMSSS.

Belongs to the bacterial CoaD family. Homohexamer. It depends on Mg(2+) as a cofactor.

The protein resides in the cytoplasm. It carries out the reaction (R)-4'-phosphopantetheine + ATP + H(+) = 3'-dephospho-CoA + diphosphate. The protein operates within cofactor biosynthesis; coenzyme A biosynthesis; CoA from (R)-pantothenate: step 4/5. Reversibly transfers an adenylyl group from ATP to 4'-phosphopantetheine, yielding dephospho-CoA (dPCoA) and pyrophosphate. This chain is Phosphopantetheine adenylyltransferase, found in Wigglesworthia glossinidia brevipalpis.